Reading from the N-terminus, the 364-residue chain is MITTEKKKKNKFLPDFEKQSIYSLRYDEMQEWLVEHGQQKFRAKQIFEWLYQKRVDSIDDMTNLSKDLRQVLKDNFAMTTLTTVVKQESKDGTIKFLFELQDGYTIETVLMRHDYGNSVCVTTQVGCRIGCTFCASTLGGLKRNLEAGEIVSQVLTVQKALDATDERVSQIVIMGIGEPFENYDEMMDFLRIVNDDNSLNIGARHITVSTSGIIPRIYDFAEEDIQINFAVSLHAAKDEIRSKLMPINRAYHVDKLMEAIKYYQEKTNRRVTFEYGLFGGVNDQLEHARDLAHLIKDLNCHVNLIPVNHVPERNYVKTPKDDIFKFEKELKRLGINATIRREQGSDIDAACGQLRAKERQVETR.

Glu107 functions as the Proton acceptor in the catalytic mechanism. Residues 113–346 (HDYGNSVCVT…ATIRREQGSD (234 aa)) enclose the Radical SAM core domain. Cys120 and Cys351 are disulfide-bonded. [4Fe-4S] cluster contacts are provided by Cys127, Cys131, and Cys134. S-adenosyl-L-methionine is bound by residues 177–178 (GE), Ser209, 232–234 (SLH), and Asn308. Catalysis depends on Cys351, which acts as the S-methylcysteine intermediate.

The protein belongs to the radical SAM superfamily. RlmN family. Requires [4Fe-4S] cluster as cofactor.

The protein localises to the cytoplasm. It carries out the reaction adenosine(2503) in 23S rRNA + 2 reduced [2Fe-2S]-[ferredoxin] + 2 S-adenosyl-L-methionine = 2-methyladenosine(2503) in 23S rRNA + 5'-deoxyadenosine + L-methionine + 2 oxidized [2Fe-2S]-[ferredoxin] + S-adenosyl-L-homocysteine. The catalysed reaction is adenosine(37) in tRNA + 2 reduced [2Fe-2S]-[ferredoxin] + 2 S-adenosyl-L-methionine = 2-methyladenosine(37) in tRNA + 5'-deoxyadenosine + L-methionine + 2 oxidized [2Fe-2S]-[ferredoxin] + S-adenosyl-L-homocysteine. Specifically methylates position 2 of adenine 2503 in 23S rRNA and position 2 of adenine 37 in tRNAs. Confers resistance to some classes of antibiotics. The chain is Probable dual-specificity RNA methyltransferase RlmN from Staphylococcus haemolyticus (strain JCSC1435).